The following is a 280-amino-acid chain: UPF0276 protein NMA0228 (280 aa).

Belongs to the UPF0276 family.

The protein is UPF0276 protein NMA0228 of Neisseria meningitidis serogroup A / serotype 4A (strain DSM 15465 / Z2491).